Reading from the N-terminus, the 380-residue chain is Putative heat stress transcription factor B-4a (380 aa).

The hydrophobic repeat HR-A/B stretch occupies residues 216–245 (LLRGNAALVQELAHMRKLYSDIIYFVQNHV). Disordered stretches follow at residues 268-296 (PAGG…TVAE) and 314-380 (INEV…VSPP). Positions 278–296 (VRGASGRSATSSSSLTVAE) are enriched in low complexity. The short motif at 346 to 348 (RKR) is the Nuclear localization signal element.

The protein belongs to the HSF family. Class B subfamily. As to quaternary structure, homotrimer. Post-translationally, exhibits temperature-dependent phosphorylation.

The protein resides in the nucleus. Transcriptional regulator that specifically binds DNA of heat shock promoter elements (HSE). This Oryza sativa subsp. japonica (Rice) protein is Putative heat stress transcription factor B-4a (HSFB4A).